The following is a 59-amino-acid chain: Chromatin protein Cren7 (59 aa).

It belongs to the Cren7 family. Monomer. In terms of processing, methylated at multiple sites, to varying extents.

It localises to the chromosome. The protein resides in the cytoplasm. A chromatin protein, binds double-stranded DNA without sequence specificity. Constrains negative DNA supercoils. The sequence is that of Chromatin protein Cren7 from Pyrobaculum aerophilum (strain ATCC 51768 / DSM 7523 / JCM 9630 / CIP 104966 / NBRC 100827 / IM2).